The sequence spans 507 residues: Sulfatase (507 aa).

Residues 1-18 (MKTRYFLLLGICMLSCRT) form the signal peptide. Positions 39, 40, and 79 each coordinate Ca(2+). C79 serves as the catalytic Nucleophile. At C79 the chain carries 3-oxoalanine (Cys). H139 is a catalytic residue. The Ca(2+) site is built by D325 and H326.

This sequence belongs to the sulfatase family. Ca(2+) serves as cofactor. The conversion to 3-oxoalanine (also known as C-formylglycine, FGly), of a serine or cysteine residue in prokaryotes and of a cysteine residue in eukaryotes, is critical for catalytic activity. This post-translational modification is severely defective in multiple sulfatase deficiency (MSD).

It localises to the periplasm. Sulfatase that may be involved in ulvan degradation. Ulvan is the main polysaccharide component of the Ulvales (green seaweed) cell wall. It is composed of disaccharide building blocks comprising 3-sulfated rhamnose (Rha3S) linked to D-glucuronic acid (GlcA), L-iduronic acid (IduA), or D-xylose (Xyl). Has no activity on different ulvan polymers. The polypeptide is Sulfatase (Formosa agariphila (strain DSM 15362 / KCTC 12365 / LMG 23005 / KMM 3901 / M-2Alg 35-1)).